The chain runs to 70 residues: uncharacterized protein (70 aa).

Residues 15-37 (IFAFLLFRLCKFCCVFCCALCNV) traverse the membrane as a helical segment.

Its subcellular location is the membrane. This is an uncharacterized protein from Dictyostelium discoideum (Social amoeba).